The following is a 1816-amino-acid chain: Kinesin-like protein KIF1B (1816 aa).

The residue at position 2 (Ser-2) is an N-acetylserine. Positions 5–354 (SVKVAVRVRP…LRYADRAKQI (350 aa)) constitute a Kinesin motor domain. An ATP-binding site is contributed by 97 to 104 (GQTGAGKS). The interaction with KIFBP stretch occupies residues 270 to 350 (NINKSLTTLG…TLSTLRYADR (81 aa)). The disordered stretch occupies residues 431–450 (FSTASMGSLTSSPSSCSLNS). Residues 432–450 (STASMGSLTSSPSSCSLNS) show a composition bias toward low complexity. Residues 470–512 (GEEAIERLKESEKIIAELNETWEEKLRKTEAIRMEREALLAEM) are a coiled coil. Positions 556 to 612 (TRVGQADAERRQDIVLSGAHIKEEHCIFRSERNNTGEVIVTLEPCERSETYVNGKRV) constitute an FHA domain. Phosphothreonine is present on residues Thr-647 and Thr-652. A coiled-coil region spans residues 672–731 (IDMKQEMEKRLQEMEILYKREKEEADLLLEQQRLDYESKLQALQKQVETRSLAAETTEEE). A phosphoserine mark is found at Ser-1054, Ser-1057, Ser-1416, Ser-1454, and Ser-1487. Residues 1550-1570 (STTTFESAITPSESSGYDSAD) form a disordered region. A phosphoserine mark is found at Ser-1573, Ser-1603, Ser-1610, and Ser-1613. A compositionally biased stretch (low complexity) spans 1620-1637 (SVSSFSSSTLTPSSTCPS). The interval 1620-1659 (SVSSFSSSTLTPSSTCPSLVDSRSSSMDQKTPEANSRASS) is disordered. Residues 1640–1659 (DSRSSSMDQKTPEANSRASS) show a composition bias toward polar residues. One can recognise a PH domain in the interval 1701–1799 (VVSKKGYLHF…WLYAFNPLLA (99 aa)).

It belongs to the TRAFAC class myosin-kinesin ATPase superfamily. Kinesin family. Unc-104 subfamily. Monomer. Interacts with KIFBP; positively regulates KIF1B microtubule motor activity. Interacts (via C-terminus end of the kinesin-motor domain) with CHP1; the interaction occurs in a calcium-dependent manner. Interacts with MADD (via death domain); links this isoform of KIF1B to Rab3-carrying vesicles in anterograde synaptic vesicle transport. In terms of tissue distribution, expressed in the brain with lower expression in testis and liver (at protein level). Strongly expressed in the brain and ovary, with lower expression in lung, kidney, uterus, testis and liver. As to expression, isoform 2 is expressed in non-neuronal tissues.

The protein resides in the cytoplasm. It localises to the cytoskeleton. The protein localises to the cytoplasmic vesicle. It is found in the secretory vesicle. Its subcellular location is the synaptic vesicle membrane. The protein resides in the lysosome. It carries out the reaction ATP + H2O + a kinesin associated with a microtubule at position (n) = ADP + phosphate a kinesin associated with a microtubule at position (n+1, toward the plus end).. In terms of biological role, has a plus-end-directed microtubule motor activity and functions as a motor for transport of vesicles and organelles along microtubules. Has a plus-end-directed microtubule motor activity and functions as a motor for anterograde synaptic vesicle transport along axonal microtubules from the cell body to the presynapse in neuronal cells. Functionally, has a plus-end-directed microtubule motor activity and functions as a motor for the translocation of lysosomes from perinuclear regions to the cell periphery. The chain is Kinesin-like protein KIF1B from Rattus norvegicus (Rat).